The sequence spans 135 residues: ATP synthase epsilon chain (135 aa).

Belongs to the ATPase epsilon chain family. In terms of assembly, F-type ATPases have 2 components, CF(1) - the catalytic core - and CF(0) - the membrane proton channel. CF(1) has five subunits: alpha(3), beta(3), gamma(1), delta(1), epsilon(1). CF(0) has three main subunits: a, b and c.

The protein localises to the cellular thylakoid membrane. Functionally, produces ATP from ADP in the presence of a proton gradient across the membrane. The sequence is that of ATP synthase epsilon chain from Prochlorococcus marinus (strain MIT 9211).